A 308-amino-acid polypeptide reads, in one-letter code: Ornithine carbamoyltransferase (308 aa).

Residues Arg-103 and 130–133 (HPAQ) each bind carbamoyl phosphate. Residues Asn-162, Asp-221, and 225–226 (SM) each bind L-ornithine. Carbamoyl phosphate is bound by residues 261-262 (CL) and Arg-289.

It belongs to the aspartate/ornithine carbamoyltransferase superfamily. OTCase family.

It is found in the cytoplasm. It carries out the reaction carbamoyl phosphate + L-ornithine = L-citrulline + phosphate + H(+). It functions in the pathway amino-acid biosynthesis; L-arginine biosynthesis; L-arginine from L-ornithine and carbamoyl phosphate: step 1/3. Reversibly catalyzes the transfer of the carbamoyl group from carbamoyl phosphate (CP) to the N(epsilon) atom of ornithine (ORN) to produce L-citrulline. The polypeptide is Ornithine carbamoyltransferase (Deinococcus radiodurans (strain ATCC 13939 / DSM 20539 / JCM 16871 / CCUG 27074 / LMG 4051 / NBRC 15346 / NCIMB 9279 / VKM B-1422 / R1)).